We begin with the raw amino-acid sequence, 345 residues long: Anthranilate phosphoribosyltransferase (345 aa).

Residues G84, 87–88 (GD), T92, 94–97 (NIST), 112–120 (KHGGRSVSS), and S124 each bind 5-phospho-alpha-D-ribose 1-diphosphate. G84 contributes to the anthranilate binding site. S96 is a binding site for Mg(2+). Residue R170 participates in anthranilate binding. Mg(2+) contacts are provided by D229 and E230.

Belongs to the anthranilate phosphoribosyltransferase family. In terms of assembly, homodimer. Mg(2+) is required as a cofactor.

The catalysed reaction is N-(5-phospho-beta-D-ribosyl)anthranilate + diphosphate = 5-phospho-alpha-D-ribose 1-diphosphate + anthranilate. It functions in the pathway amino-acid biosynthesis; L-tryptophan biosynthesis; L-tryptophan from chorismate: step 2/5. Functionally, catalyzes the transfer of the phosphoribosyl group of 5-phosphorylribose-1-pyrophosphate (PRPP) to anthranilate to yield N-(5'-phosphoribosyl)-anthranilate (PRA). The polypeptide is Anthranilate phosphoribosyltransferase (Leptothrix cholodnii (strain ATCC 51168 / LMG 8142 / SP-6) (Leptothrix discophora (strain SP-6))).